Consider the following 242-residue polypeptide: MTMKLVAAALCLSLLAAGLWVGLSLTAESIEEGKPGGEKPGGGKPGGSGRGCFLPPLPKEDVSLCRNLEVFYMEMGNISCKIVPKCNLYRQKITAWQAPIVKFHTALDGALYLLVMVDPDAPSRSNPVMKYWRHWLVSNITGADMKSGSIRGNVLSDYSPPTPPPETGLHRYQFFVYLQGDRDISLSVEEKADLGGWNLDKFLQQYGLRDPDTSTQFMTQFDEELSSEFGRINDDQEQFNQK.

An N-terminal signal peptide occupies residues 1–26 (MTMKLVAAALCLSLLAAGLWVGLSLT). Residues 31–50 (EEGKPGGEKPGGGKPGGSGR) form a disordered region. Over residues 38–50 (EKPGGGKPGGSGR) the composition is skewed to gly residues. 2 N-linked (GlcNAc...) asparagine glycosylation sites follow: N77 and N139. The tract at residues 210–242 (DPDTSTQFMTQFDEELSSEFGRINDDQEQFNQK) is important for secretion.

The protein belongs to the phosphatidylethanolamine-binding protein family.

The protein resides in the secreted. Its function is as follows. Promotes AKT phosphorylation, suggesting a possible role in the PI3K-AKT signaling pathway. The polypeptide is Phosphatidylethanolamine-binding protein 4 (Pebp4) (Mus musculus (Mouse)).